Consider the following 590-residue polypeptide: Aspartate--tRNA ligase (590 aa).

Glu180 contributes to the L-aspartate binding site. Positions Gln204–Lys207 are aspartate. Arg226 provides a ligand contact to L-aspartate. Residues Arg226–Glu228 and Gln235 each bind ATP. His454 lines the L-aspartate pocket. Glu488 is a binding site for ATP. Arg495 lines the L-aspartate pocket. Gly540–Arg543 lines the ATP pocket.

It belongs to the class-II aminoacyl-tRNA synthetase family. Type 1 subfamily. As to quaternary structure, homodimer.

The protein localises to the cytoplasm. It catalyses the reaction tRNA(Asp) + L-aspartate + ATP = L-aspartyl-tRNA(Asp) + AMP + diphosphate. Its function is as follows. Catalyzes the attachment of L-aspartate to tRNA(Asp) in a two-step reaction: L-aspartate is first activated by ATP to form Asp-AMP and then transferred to the acceptor end of tRNA(Asp). The protein is Aspartate--tRNA ligase of Clostridium kluyveri (strain NBRC 12016).